A 462-amino-acid polypeptide reads, in one-letter code: FAD-dependent monooxygenase opaC (462 aa).

Asparagine 10 carries an N-linked (GlcNAc...) asparagine glycan. The chain crosses the membrane as a helical span at residues 14–34 (ITVIIIGLGIGGLTAAISCHL). Aspartate 43 is a binding site for FAD. N-linked (GlcNAc...) asparagine glycosylation is present at asparagine 60. Arginine 115 lines the FAD pocket. Residue arginine 193 is part of the active site. FAD is bound by residues aspartate 322 and alanine 335.

The protein belongs to the paxM FAD-dependent monooxygenase family. Requires FAD as cofactor.

The protein localises to the membrane. It participates in secondary metabolite biosynthesis. Its function is as follows. FAD-dependent monooxygenase; part of the gene cluster that mediates the biosynthesis of oxepinamides, derivatives of anthranilyl-containing tripeptides that share an oxepin ring and a fused pyrimidinone moiety. The nonribosomal peptide synthetase (NRPS) opaA assembles the quinazolinone core with D-Phe incorporation. The first adenylation domain (A1) of opaA loads and activates anthranilic acid whereas the second A domain (A2) is for activating of L-Phe, which is then converted to D-form by the E domain. The third A domain (A3) is responsible for L-Ile activation and the terminal condensation domain C3 for cyclization and releasing the NRPS product protuboxepin K. The cytochrome P450 monooxygenase opaB then catalyzes alone the oxepin ring formation to convert protuboxepin K into protuboxepin A. The flavoenzyme opaC installs subsequently one hydroxyl group at the oxepin ring, accompanied by double bond migration, to form 15-epi-oxepinamide E. The epimerase opaE changes the D-Phe residue back to L-form, leading to oxepinamide E, which is further methylated at the hydroxyl group at C-12 by the O-methyltransferase OpaF to yield oxepinamide F. In Aspergillus ustus, this protein is FAD-dependent monooxygenase opaC.